We begin with the raw amino-acid sequence, 749 residues long: Cytosolic phospholipase A2 (749 aa).

The segment at 1–178 is phospholipid binding; sequence MSFIDPYQHI…MKKLLGPKNS (178 aa). Serine 2 carries the post-translational modification Phosphoserine. The 117-residue stretch at 6–122 folds into the C2 domain; the sequence is PYQHIIVEHQ…KVGEKKEVPF (117 aa). Positions 40, 41, 43, 65, 93, 94, and 95 each coordinate Ca(2+). Residues 140–740 form the PLA2c domain; that stretch reads SCPDLRFSMA…SNVEARRFFN (601 aa). The active-site Nucleophile is the serine 228. A Phosphothreonine modification is found at threonine 268. Positions 409–457 are disordered; sequence GSQSRGSTMEEELENITTKHIVSNDSSDSDDESHEPKGTENEDAGSDYQ. Phosphoserine is present on residues serine 434, serine 435, and serine 437. Serine 505 bears the Phosphoserine; by MAPK mark. Phosphoserine is present on serine 515. Residue lysine 541 forms a Glycyl lysine isopeptide (Lys-Gly) (interchain with G-Cter in SUMO2) linkage. Aspartate 549 (proton acceptor) is an active-site residue. A Glycyl lysine isopeptide (Lys-Gly) (interchain with G-Cter in SUMO2) cross-link involves residue lysine 606. Phosphoserine is present on residues serine 727 and serine 729.

Interacts with KAT5. In terms of processing, phosphorylated at both Ser-505 and Ser-727 in response to mitogenic stimuli.

Its subcellular location is the cytoplasm. It is found in the golgi apparatus membrane. The protein localises to the nucleus envelope. The catalysed reaction is a 1,2-diacyl-sn-glycero-3-phosphocholine + H2O = a 1-acyl-sn-glycero-3-phosphocholine + a fatty acid + H(+). It catalyses the reaction a 1-O-alkyl-2-acyl-sn-glycero-3-phosphocholine + H2O = a 1-O-alkyl-sn-glycero-3-phosphocholine + a fatty acid + H(+). It carries out the reaction a 1-acyl-sn-glycero-3-phosphocholine + H2O = sn-glycerol 3-phosphocholine + a fatty acid + H(+). The enzyme catalyses 1-hexadecanoyl-2-(5Z,8Z,11Z,14Z-eicosatetraenoyl)-sn-glycero-3-phosphocholine + H2O = 1-hexadecanoyl-sn-glycero-3-phosphocholine + (5Z,8Z,11Z,14Z)-eicosatetraenoate + H(+). The catalysed reaction is 1,2-di-(5Z,8Z,11Z,14Z-eicosatetraenoyl)-sn-glycero-3-phosphocholine + H2O = 1-(5Z,8Z,11Z,14Z-eicosatetraenoyl)-sn-glycero-3-phosphocholine + (5Z,8Z,11Z,14Z)-eicosatetraenoate + H(+). It catalyses the reaction 1-octadecanoyl-2-(5Z,8Z,11Z,14Z-eicosatetraenoyl)-sn-glycero-3-phosphocholine + H2O = 1-octadecanoyl-sn-glycero-3-phosphocholine + (5Z,8Z,11Z,14Z)-eicosatetraenoate + H(+). It carries out the reaction 1-hexadecanoyl-2-(9Z,12Z-octadecadienoyl)-sn-glycero-3-phosphocholine + H2O = (9Z,12Z)-octadecadienoate + 1-hexadecanoyl-sn-glycero-3-phosphocholine + H(+). The enzyme catalyses 1-octadecanoyl-2-(9Z,12Z,15Z-octadecatrienoyl)-sn-glycero-3-phosphocholine + H2O = (9Z,12Z,15Z)-octadecatrienoate + 1-octadecanoyl-sn-glycero-3-phosphocholine + H(+). The catalysed reaction is 1-(5Z,8Z,11Z,14Z-eicosatetraenoyl)-2-hexadecanoyl-sn-glycero-3-phosphocholine + H2O = 1-(5Z,8Z,11Z,14Z-eicosatetraenoyl)-sn-glycero-3-phosphocholine + hexadecanoate + H(+). It catalyses the reaction 1-O-hexadecyl-2-(5Z,8Z,11Z,14Z)-eicosatetraenoyl-sn-glycero-3-phosphocholine + H2O = 1-O-hexadecyl-sn-glycero-3-phosphocholine + (5Z,8Z,11Z,14Z)-eicosatetraenoate + H(+). It carries out the reaction 1,2-di-(9Z-octadecenoyl)-sn-glycero-3-phospho-(1'-sn-glycerol) + H2O = 1-(9Z-octadecenoyl)-sn-glycero-3-phospho-(1'-sn-glycerol) + (9Z)-octadecenoate + H(+). The enzyme catalyses 1-octadecanoyl-2-(5Z,8Z,11Z,14Z-eicosatetraenoyl)-sn-glycero-3-phosphate + H2O = 1-octadecanoyl-sn-glycero-3-phosphate + (5Z,8Z,11Z,14Z)-eicosatetraenoate + H(+). The catalysed reaction is 1-hexadecanoyl-sn-glycero-3-phosphocholine + H2O = sn-glycerol 3-phosphocholine + hexadecanoate + H(+). It catalyses the reaction 2-(prostaglandin E2)-sn-glycero-3-phosphoethanolamine + H2O = sn-glycero-3-phosphoethanolamine + prostaglandin E2 + H(+). It carries out the reaction 2-[(15S)-hydroxy-(5Z,8Z,11Z,13E)-eicosatetraenoyl]-sn-glycero-3-phosphocholine + H2O = (15S)-hydroxy-(5Z,8Z,11Z,13E)-eicosatetraenoate + sn-glycerol 3-phosphocholine + H(+). The enzyme catalyses 2-[(15R)-hydroxy-(5Z,8Z,11Z,13E)-eicosatetraenoyl]-sn-glycero-3-phosphocholine + H2O = (15R)-hydroxy-(5Z,8Z,11Z,13E)-eicosatetraenoate + sn-glycerol 3-phosphocholine + H(+). The catalysed reaction is 2-(prostaglandin E2)-sn-glycero-3-phosphocholine + H2O = prostaglandin E2 + sn-glycerol 3-phosphocholine + H(+). It catalyses the reaction 2-[(11R)-hydroxy-(5Z,8Z,12E,14Z)-eicosatetraenoyl]-sn-glycero-3-phosphocholine + H2O = (11R)-hydroxy-(5Z,8Z,12E,14Z)-eicosatetraenoate + sn-glycerol 3-phosphocholine + H(+). It carries out the reaction 1-(5Z,8Z,11Z,14Z-eicosatetraenoyl)-2-O-hexadecyl-sn-glycero-3-phosphocholine + H2O = 2-O-hexadecyl-sn-glycero-3-phosphocholine + (5Z,8Z,11Z,14Z)-eicosatetraenoate + H(+). The enzyme catalyses 1-octadecanoyl-2-(5Z,8Z,11Z,14Z-eicosatetraenoyl)-sn-glycero-3-phosphocholine + glycerol = 1-(5Z,8Z,11Z,14Z-eicosatetraenoyl)-glycerol + 1-octadecanoyl-sn-glycero-3-phosphocholine. The catalysed reaction is 1-octadecanoyl-2-(9Z,12Z,15Z-octadecatrienoyl)-sn-glycero-3-phosphocholine + glycerol = 1-(9Z,12Z,15Z-octadecatrienoyl)-glycerol + 1-octadecanoyl-sn-glycero-3-phosphocholine. It participates in membrane lipid metabolism; glycerophospholipid metabolism. The protein operates within lipid metabolism; arachidonate metabolism. Its pathway is lipid metabolism; prostaglandin biosynthesis. It functions in the pathway lipid metabolism; leukotriene B4 biosynthesis. Activated by cytosolic calcium, which is necessary for binding to membrane lipids. Activated by phosphorylation in response to mitogenic stimuli. In terms of biological role, has primarily calcium-dependent phospholipase and lysophospholipase activities, with a major role in membrane lipid remodeling and biosynthesis of lipid mediators of the inflammatory response. Plays an important role in embryo implantation and parturition through its ability to trigger prostanoid production. Preferentially hydrolyzes the ester bond of the fatty acyl group attached at sn-2 position of phospholipids (phospholipase A2 activity). Selectively hydrolyzes sn-2 arachidonoyl group from membrane phospholipids, providing the precursor for eicosanoid biosynthesis via the cyclooxygenase pathway. In an alternative pathway of eicosanoid biosynthesis, hydrolyzes sn-2 fatty acyl chain of eicosanoid lysophopholipids to release free bioactive eicosanoids. Hydrolyzes the ester bond of the fatty acyl group attached at sn-1 position of phospholipids (phospholipase A1 activity) only if an ether linkage rather than an ester linkage is present at the sn-2 position. This hydrolysis is not stereospecific. Has calcium-independent phospholipase A2 and lysophospholipase activities in the presence of phosphoinositides. Has O-acyltransferase activity. Catalyzes the transfer of fatty acyl chains from phospholipids to a primary hydroxyl group of glycerol (sn-1 or sn-3), potentially contributing to monoacylglycerol synthesis. In Pongo abelii (Sumatran orangutan), this protein is Cytosolic phospholipase A2 (PLA2G4A).